The sequence spans 329 residues: Ubiquitin carboxyl-terminal hydrolase isozyme L5 (329 aa).

The region spanning 7 to 225 is the UCH catalytic domain; that stretch reads EWCLMESDPG…IRFNLMAIVS (219 aa). Lysine 47 carries the N6-succinyllysine modification. The active-site Nucleophile is the cysteine 88. The residue at position 158 (lysine 158) is an N6-acetyllysine. Residue histidine 164 is the Proton donor of the active site. At lysine 289 the chain carries N6-succinyllysine. Residues 291–319 enclose the ULD domain; it reads NYLPFIMELLKTLAEHQQLIPLVEKAKEK. Positions 313 to 329 are interaction with ADRM1; it reads VEKAKEKQNAKKAQETK.

It belongs to the peptidase C12 family. As to quaternary structure, component of the 19S (PA700) regulatory complex of the 26S proteasome. Interacts with ADRM1 and NFRKB; in vitro ADRM1 and NFRKB compete for interaction with UCHL5. Component of the INO80 complex; specifically part of a complex module associated with N-terminus of INO80.

Its subcellular location is the cytoplasm. The protein resides in the nucleus. It catalyses the reaction Thiol-dependent hydrolysis of ester, thioester, amide, peptide and isopeptide bonds formed by the C-terminal Gly of ubiquitin (a 76-residue protein attached to proteins as an intracellular targeting signal).. Activated by ADRM1. Inhibited by interaction with NFRKB. Functionally, protease that specifically cleaves 'Lys-48'-linked polyubiquitin chains. Deubiquitinating enzyme associated with the 19S regulatory subunit of the 26S proteasome. Putative regulatory component of the INO80 complex; however is inactive in the INO80 complex and is activated by a transient interaction of the INO80 complex with the proteasome via ADRM1. In Homo sapiens (Human), this protein is Ubiquitin carboxyl-terminal hydrolase isozyme L5 (UCHL5).